The chain runs to 107 residues: Thioredoxin (107 aa).

The Thioredoxin domain occupies 2-107; sequence AGVLKNVTDD…ALLRPGPVPR (106 aa). A disulfide bond links cysteine 33 and cysteine 36.

The protein belongs to the thioredoxin family.

In terms of biological role, component of the thioredoxin-thioredoxin reductase system. Participates in various redox reactions through the reversible oxidation of its active center dithiol to a disulfide and catalyzes dithiol-disulfide exchange reactions. The sequence is that of Thioredoxin (trxA) from Streptomyces clavuligerus.